The chain runs to 186 residues: Ribosome-recycling factor (186 aa).

Belongs to the RRF family.

Its subcellular location is the cytoplasm. Responsible for the release of ribosomes from messenger RNA at the termination of protein biosynthesis. May increase the efficiency of translation by recycling ribosomes from one round of translation to another. The protein is Ribosome-recycling factor of Rhizobium leguminosarum bv. trifolii (strain WSM2304).